Consider the following 487-residue polypeptide: N-succinylglutamate 5-semialdehyde dehydrogenase (487 aa).

221–226 (GSSRTG) lines the NAD(+) pocket. Active-site residues include glutamate 244 and cysteine 278.

Belongs to the aldehyde dehydrogenase family. AstD subfamily.

It carries out the reaction N-succinyl-L-glutamate 5-semialdehyde + NAD(+) + H2O = N-succinyl-L-glutamate + NADH + 2 H(+). Its pathway is amino-acid degradation; L-arginine degradation via AST pathway; L-glutamate and succinate from L-arginine: step 4/5. Functionally, catalyzes the NAD-dependent reduction of succinylglutamate semialdehyde into succinylglutamate. The sequence is that of N-succinylglutamate 5-semialdehyde dehydrogenase from Ectopseudomonas mendocina (strain ymp) (Pseudomonas mendocina).